The following is a 437-amino-acid chain: Glutamate-1-semialdehyde 2,1-aminomutase (437 aa).

Residue Lys274 is modified to N6-(pyridoxal phosphate)lysine.

Belongs to the class-III pyridoxal-phosphate-dependent aminotransferase family. HemL subfamily. Homodimer. Requires pyridoxal 5'-phosphate as cofactor.

It localises to the cytoplasm. The enzyme catalyses (S)-4-amino-5-oxopentanoate = 5-aminolevulinate. The protein operates within porphyrin-containing compound metabolism; protoporphyrin-IX biosynthesis; 5-aminolevulinate from L-glutamyl-tRNA(Glu): step 2/2. This chain is Glutamate-1-semialdehyde 2,1-aminomutase, found in Verminephrobacter eiseniae (strain EF01-2).